A 326-amino-acid polypeptide reads, in one-letter code: MNKSFILSTGSYLPKKKLGNDEIALMVETSDEWIRQRTGITQRYIADEAELTSDLAVNSAKNAIEKAQISVDEIGLIIVATTTPDKTLPSCATIAQNKLKCKNAFSFDVQAACSGFIYAVTIADSLIKSNDRIKYALVIGAEIMSRIVDWKDRSTCVLFGDGAGAVIMKSTAHCNEMTENSTRGIISTNLYSDGNVDVLCTKGGISSTGDSGKIYMNGREVFKHAVDKLTASIEETLRCNNLKITDIDWLVPHQANIRIIEAVVKKLNFLMEKVINTVDQHANTSAASIPLALDYAIQKPKIKPGSLGILVAIGAGLTWGSVLLRY.

Catalysis depends on residues Cys-113 and His-253. The interval 254-258 is ACP-binding; that stretch reads QANIR. Asn-283 is an active-site residue.

This sequence belongs to the thiolase-like superfamily. FabH family. In terms of assembly, homodimer.

It localises to the cytoplasm. It carries out the reaction malonyl-[ACP] + acetyl-CoA + H(+) = 3-oxobutanoyl-[ACP] + CO2 + CoA. It functions in the pathway lipid metabolism; fatty acid biosynthesis. Its function is as follows. Catalyzes the condensation reaction of fatty acid synthesis by the addition to an acyl acceptor of two carbons from malonyl-ACP. Catalyzes the first condensation reaction which initiates fatty acid synthesis and may therefore play a role in governing the total rate of fatty acid production. Possesses both acetoacetyl-ACP synthase and acetyl transacylase activities. Its substrate specificity determines the biosynthesis of branched-chain and/or straight-chain of fatty acids. The sequence is that of Beta-ketoacyl-[acyl-carrier-protein] synthase III from Wolbachia sp. subsp. Brugia malayi (strain TRS).